Consider the following 376-residue polypeptide: N-acetyldiaminopimelate deacetylase (376 aa).

Residue Asp-69 is part of the active site. Glu-128 functions as the Proton acceptor in the catalytic mechanism.

Belongs to the peptidase M20A family. N-acetyldiaminopimelate deacetylase subfamily.

The catalysed reaction is N-acetyl-(2S,6S)-2,6-diaminopimelate + H2O = (2S,6S)-2,6-diaminopimelate + acetate. It participates in amino-acid biosynthesis; L-lysine biosynthesis via DAP pathway; LL-2,6-diaminopimelate from (S)-tetrahydrodipicolinate (acetylase route): step 3/3. Its function is as follows. Catalyzes the conversion of N-acetyl-diaminopimelate to diaminopimelate and acetate. This Streptococcus uberis (strain ATCC BAA-854 / 0140J) protein is N-acetyldiaminopimelate deacetylase.